Reading from the N-terminus, the 418-residue chain is Serine/threonine transporter SstT (418 aa).

8 helical membrane-spanning segments follow: residues 21-41 (ILIG…AAIA), 49-69 (FVGA…IASI), 83-103 (ILFL…VVSF), 142-162 (ALLN…GIAL), 190-210 (FAPL…GFGA), 217-237 (LLVV…PLIV), 299-319 (MAGA…TLGI), and 331-351 (VVAA…LLLI).

This sequence belongs to the dicarboxylate/amino acid:cation symporter (DAACS) (TC 2.A.23) family.

It is found in the cell inner membrane. The enzyme catalyses L-serine(in) + Na(+)(in) = L-serine(out) + Na(+)(out). It catalyses the reaction L-threonine(in) + Na(+)(in) = L-threonine(out) + Na(+)(out). Its function is as follows. Involved in the import of serine and threonine into the cell, with the concomitant import of sodium (symport system). This chain is Serine/threonine transporter SstT, found in Yersinia pseudotuberculosis serotype O:1b (strain IP 31758).